A 51-amino-acid polypeptide reads, in one-letter code: Toxin CSTX-18 (51 aa).

4 disulfides stabilise this stretch: C9–C22, C14–C27, C21–C36, and C29–C34.

Contains 4 disulfide bonds. In terms of tissue distribution, expressed by the venom gland.

The protein localises to the secreted. The polypeptide is Toxin CSTX-18 (Cupiennius salei (American wandering spider)).